We begin with the raw amino-acid sequence, 212 residues long: Regulator of G-protein signaling 2 (212 aa).

Disordered regions lie at residues His11 to Met33 and Phe48 to Phe69. Positions Lys32 to Pro66 are necessary for membrane association. Residues Leu79 to Cys116 form a necessary to inhibit protein synthesis region. Residues Ala83–Cys199 enclose the RGS domain.

In terms of assembly, interacts with GNAQ. Does not interact with GNAI1 and GNAI3. Interacts with EIF2B5. Interacts with PRKG1 (isoform alpha). Phosphorylated by protein kinase C. Phosphorylation by PRKG1 leads to activation of RGS2 activity.

The protein resides in the cell membrane. Its subcellular location is the cytoplasm. The protein localises to the nucleus. It localises to the nucleolus. Functionally, regulates G protein-coupled receptor signaling cascades. Inhibits signal transduction by increasing the GTPase activity of G protein alpha subunits, thereby driving them into their inactive GDP-bound form. It is involved in the negative regulation of the angiotensin-activated signaling pathway. Plays a role in the regulation of blood pressure in response to signaling via G protein-coupled receptors and GNAQ. Plays a role in regulating the constriction and relaxation of vascular smooth muscle. Binds EIF2B5 and blocks its activity, thereby inhibiting the translation of mRNA into protein. The polypeptide is Regulator of G-protein signaling 2 (RGS2) (Sus scrofa (Pig)).